Reading from the N-terminus, the 284-residue chain is Exosome complex component MTR3 (284 aa).

Belongs to the RNase PH family. In terms of assembly, component of the RNA exosome complex.

The protein localises to the cytoplasm. Its subcellular location is the nucleus. It is found in the nucleolus. Its function is as follows. Non-catalytic component of the RNA exosome complex which has 3'-&gt;5' exoribonuclease activity and participates in a multitude of cellular RNA processing and degradation events. This chain is Exosome complex component MTR3 (MTR3), found in Chaetomium thermophilum (strain DSM 1495 / CBS 144.50 / IMI 039719) (Thermochaetoides thermophila).